The sequence spans 142 residues: Ribosomal RNA large subunit methyltransferase H (142 aa).

Glycine 89 is an S-adenosyl-L-methionine binding site.

The protein belongs to the RNA methyltransferase RlmH family. Homodimer.

It is found in the cytoplasm. The catalysed reaction is pseudouridine(1915) in 23S rRNA + S-adenosyl-L-methionine = N(3)-methylpseudouridine(1915) in 23S rRNA + S-adenosyl-L-homocysteine + H(+). In terms of biological role, specifically methylates the pseudouridine at position 1915 (m3Psi1915) in 23S rRNA. This Zymomonas mobilis subsp. mobilis (strain ATCC 31821 / ZM4 / CP4) protein is Ribosomal RNA large subunit methyltransferase H.